The following is an 80-amino-acid chain: Small ribosomal subunit protein uS17 (80 aa).

This sequence belongs to the universal ribosomal protein uS17 family. In terms of assembly, part of the 30S ribosomal subunit.

Functionally, one of the primary rRNA binding proteins, it binds specifically to the 5'-end of 16S ribosomal RNA. This Chelativorans sp. (strain BNC1) protein is Small ribosomal subunit protein uS17.